The primary structure comprises 167 residues: Anaerobic nitrite reductase NSHB4 (167 aa).

The Globin domain maps to 12-162; that stretch reads RFTEEQEALV…LVAAIKEGMK (151 aa). The Homodimerization signature appears at 45–49; the sequence is EVAPS. 5 residues coordinate heme b: Ser55, His73, Arg103, Thr107, and His108. The short motif at 115–127 is the Homodimerization element; the sequence is DTHFEVARFALLE.

It belongs to the plant globin family. In terms of assembly, homodimer. The cofactor is heme b.

It localises to the cytoplasm. The protein resides in the nucleus. It catalyses the reaction Fe(III)-heme b-[protein] + nitric oxide + H2O = Fe(II)-heme b-[protein] + nitrite + 2 H(+). Phytoglobin that reduces nitrite to nitric oxide under anoxic conditions (e.g. during flooding or in waterlogged soil). May not function as an oxygen storage or transport protein. Has an unusually high affinity for O(2) through an hexacoordinate heme iron because of a very low dissociation constant. In Oryza sativa subsp. indica (Rice), this protein is Anaerobic nitrite reductase NSHB4.